The primary structure comprises 248 residues: PF03932 family protein CutC (248 aa).

It belongs to the CutC family. In terms of assembly, homodimer.

Its subcellular location is the cytoplasm. The chain is PF03932 family protein CutC from Escherichia coli (strain SMS-3-5 / SECEC).